Reading from the N-terminus, the 103-residue chain is Large ribosomal subunit protein uL23 (103 aa).

Belongs to the universal ribosomal protein uL23 family. In terms of assembly, part of the 50S ribosomal subunit. Contacts protein L29, and trigger factor when it is bound to the ribosome.

Its function is as follows. One of the early assembly proteins it binds 23S rRNA. One of the proteins that surrounds the polypeptide exit tunnel on the outside of the ribosome. Forms the main docking site for trigger factor binding to the ribosome. This chain is Large ribosomal subunit protein uL23, found in Prochlorococcus marinus (strain NATL1A).